Consider the following 243-residue polypeptide: MDKKELINNGKVKSVYTTDDENAVIIEFRDDMTAGDGARKEVMNKKGSYNALISTKLFKVLEENGIKTQFIDLPETNVMVAKKLEMIPIEVIVRNIATGSLIRKYPIADGTKLDPPIVQMDFKADEFHDPMLNDSIIKALGLATQEEIDELTEKALKINEVLSEFLLEAGIILVDFKVEFGKDKNGEIILGDEISPDGCRLWDSETLDMLDKELFRKGKDNEVMDAYVEVYNRIIPDDEKIEL.

This sequence belongs to the SAICAR synthetase family.

It carries out the reaction 5-amino-1-(5-phospho-D-ribosyl)imidazole-4-carboxylate + L-aspartate + ATP = (2S)-2-[5-amino-1-(5-phospho-beta-D-ribosyl)imidazole-4-carboxamido]succinate + ADP + phosphate + 2 H(+). The protein operates within purine metabolism; IMP biosynthesis via de novo pathway; 5-amino-1-(5-phospho-D-ribosyl)imidazole-4-carboxamide from 5-amino-1-(5-phospho-D-ribosyl)imidazole-4-carboxylate: step 1/2. The protein is Phosphoribosylaminoimidazole-succinocarboxamide synthase of Methanobrevibacter smithii (strain ATCC 35061 / DSM 861 / OCM 144 / PS).